The primary structure comprises 250 residues: UDP-2,3-diacylglucosamine hydrolase (250 aa).

Residues Asp-8, His-10, Asp-41, Asn-79, and His-114 each contribute to the Mn(2+) site. 79–80 contacts substrate; it reads NR. Asp-122, Ser-160, Asp-172, Gln-175, and His-203 together coordinate substrate. Mn(2+) contacts are provided by His-203 and His-205.

This sequence belongs to the LpxH family. Requires Mn(2+) as cofactor.

Its subcellular location is the cell inner membrane. It catalyses the reaction UDP-2-N,3-O-bis[(3R)-3-hydroxytetradecanoyl]-alpha-D-glucosamine + H2O = 2-N,3-O-bis[(3R)-3-hydroxytetradecanoyl]-alpha-D-glucosaminyl 1-phosphate + UMP + 2 H(+). It participates in glycolipid biosynthesis; lipid IV(A) biosynthesis; lipid IV(A) from (3R)-3-hydroxytetradecanoyl-[acyl-carrier-protein] and UDP-N-acetyl-alpha-D-glucosamine: step 4/6. Functionally, hydrolyzes the pyrophosphate bond of UDP-2,3-diacylglucosamine to yield 2,3-diacylglucosamine 1-phosphate (lipid X) and UMP by catalyzing the attack of water at the alpha-P atom. Involved in the biosynthesis of lipid A, a phosphorylated glycolipid that anchors the lipopolysaccharide to the outer membrane of the cell. This chain is UDP-2,3-diacylglucosamine hydrolase, found in Xylella fastidiosa (strain M12).